Here is a 298-residue protein sequence, read N- to C-terminus: Lipoyl synthase (298 aa).

[4Fe-4S] cluster-binding residues include Cys40, Cys45, Cys51, Cys67, Cys71, Cys74, and Ser280. Residues Ala53–Ser269 enclose the Radical SAM core domain.

The protein belongs to the radical SAM superfamily. Lipoyl synthase family. Requires [4Fe-4S] cluster as cofactor.

It is found in the cytoplasm. It carries out the reaction [[Fe-S] cluster scaffold protein carrying a second [4Fe-4S](2+) cluster] + N(6)-octanoyl-L-lysyl-[protein] + 2 oxidized [2Fe-2S]-[ferredoxin] + 2 S-adenosyl-L-methionine + 4 H(+) = [[Fe-S] cluster scaffold protein] + N(6)-[(R)-dihydrolipoyl]-L-lysyl-[protein] + 4 Fe(3+) + 2 hydrogen sulfide + 2 5'-deoxyadenosine + 2 L-methionine + 2 reduced [2Fe-2S]-[ferredoxin]. It functions in the pathway protein modification; protein lipoylation via endogenous pathway; protein N(6)-(lipoyl)lysine from octanoyl-[acyl-carrier-protein]. In terms of biological role, catalyzes the radical-mediated insertion of two sulfur atoms into the C-6 and C-8 positions of the octanoyl moiety bound to the lipoyl domains of lipoate-dependent enzymes, thereby converting the octanoylated domains into lipoylated derivatives. This is Lipoyl synthase from Bacillus cytotoxicus (strain DSM 22905 / CIP 110041 / 391-98 / NVH 391-98).